Consider the following 669-residue polypeptide: Exostosin-like 1 (669 aa).

Over 1–8 (MLWRRKSF) the chain is Cytoplasmic. A helical; Signal-anchor for type II membrane protein transmembrane segment spans residues 9–29 (WLALSAFWLLLVLLGVFPLRL). At 30–669 (AVLPGPLPGR…RKKYRSLEKP (640 aa)) the chain is on the lumenal side. Asn-263 and Asn-480 each carry an N-linked (GlcNAc...) asparagine glycan. Cys-577 and Cys-627 are oxidised to a cystine. Residues 601–621 (RQHPEAVPMDSGDPRPVPEPQ) form a disordered region.

The protein belongs to the glycosyltransferase 47 family.

The protein localises to the endoplasmic reticulum membrane. The enzyme catalyses 3-O-{[(1-&gt;4)-beta-D-GlcA-(1-&gt;4)-alpha-D-GlcNAc](n)-(1-&gt;4)-beta-D-GlcA-(1-&gt;3)-beta-D-Gal-(1-&gt;3)-beta-D-Gal-(1-&gt;4)-beta-D-Xyl}-L-seryl-[protein] + UDP-N-acetyl-alpha-D-glucosamine = 3-O-{alpha-D-GlcNAc-[(1-&gt;4)-beta-D-GlcA-(1-&gt;4)-alpha-D-GlcNAc](n)-(1-&gt;4)-beta-D-GlcA-(1-&gt;3)-beta-D-Gal-(1-&gt;3)-beta-D-Gal-(1-&gt;4)-beta-D-Xyl}-L-seryl-[protein] + UDP + H(+). It participates in protein modification; protein glycosylation. Glycosyltransferase required for the biosynthesis of heparan-sulfate (HS). Transfers N-acetyl-alpha-D-glucosamine to the nascent HS chain (GlcNAcT-II activity). Appears to lack GlcNAcT I and GlcAT-II activities. In Mus musculus (Mouse), this protein is Exostosin-like 1 (Extl1).